Consider the following 337-residue polypeptide: Integrase/recombinase (337 aa).

Residues 14–94 (VKVLDQLRER…ALLFFYGKVL (81 aa)) enclose the Core-binding (CB) domain. Residues 112–328 (RLPVVLTPDE…GGAGVRSPLD (217 aa)) form the Tyr recombinase domain. Active-site residues include Arg-146, Lys-171, His-277, Arg-280, and His-303. Tyr-312 acts as the O-(3'-phospho-DNA)-tyrosine intermediate in catalysis.

Belongs to the 'phage' integrase family.

Functionally, putative integrase believed to be involved in the insertion of antibiotic resistance genes into plasmids and transposons. The protein is Integrase/recombinase (int) of Escherichia coli.